The following is a 195-amino-acid chain: E3 ubiquitin-protein ligase ZNRF1 (195 aa).

The segment covering 1-10 (MGGKQSSASR) has biased composition (polar residues). The segment at 1-37 (MGGKQSSASRSRAPFPGVSSDDSAVPPSSNFGHFRGG) is disordered. A lipid anchor (N-myristoyl glycine) is attached at Gly2. The span at 18–29 (VSSDDSAVPPSS) shows a compositional bias: low complexity. The RING-type; atypical zinc-finger motif lies at 152–193 (CVICLEELSQGDTIARLPCLCIYHKSCIDSWFEVNRCCPEHP).

Its subcellular location is the endosome. It is found in the lysosome. The protein localises to the membrane. The enzyme catalyses S-ubiquitinyl-[E2 ubiquitin-conjugating enzyme]-L-cysteine + [acceptor protein]-L-lysine = [E2 ubiquitin-conjugating enzyme]-L-cysteine + N(6)-ubiquitinyl-[acceptor protein]-L-lysine.. It functions in the pathway protein modification; protein ubiquitination. In terms of biological role, E3 ubiquitin-protein ligase that plays a role in neuron cells differentiation. Plays a role in the establishment and maintenance of neuronal transmission and plasticity. The sequence is that of E3 ubiquitin-protein ligase ZNRF1 (znrf1) from Xenopus laevis (African clawed frog).